The chain runs to 226 residues: Orotate phosphoribosyltransferase (226 aa).

K30 contributes to the 5-phospho-alpha-D-ribose 1-diphosphate binding site. 38-39 (FF) is an orotate binding site. 5-phospho-alpha-D-ribose 1-diphosphate is bound by residues 76–77 (YK), R106, K107, K110, H112, and 132–140 (DDVMTAGTA). Orotate-binding residues include T136 and R164.

The protein belongs to the purine/pyrimidine phosphoribosyltransferase family. PyrE subfamily. In terms of assembly, homodimer.

It carries out the reaction orotidine 5'-phosphate + diphosphate = orotate + 5-phospho-alpha-D-ribose 1-diphosphate. It functions in the pathway pyrimidine metabolism; UMP biosynthesis via de novo pathway; UMP from orotate: step 1/2. Catalyzes the transfer of a ribosyl phosphate group from 5-phosphoribose 1-diphosphate to orotate, leading to the formation of orotidine monophosphate (OMP). This Kluyveromyces lactis (strain ATCC 8585 / CBS 2359 / DSM 70799 / NBRC 1267 / NRRL Y-1140 / WM37) (Yeast) protein is Orotate phosphoribosyltransferase (URA5).